Consider the following 1070-residue polypeptide: DNA-directed RNA polymerase subunit beta (1070 aa).

This sequence belongs to the RNA polymerase beta chain family. In plastids the minimal PEP RNA polymerase catalytic core is composed of four subunits: alpha, beta, beta', and beta''. When a (nuclear-encoded) sigma factor is associated with the core the holoenzyme is formed, which can initiate transcription.

The protein resides in the plastid. It is found in the chloroplast. The catalysed reaction is RNA(n) + a ribonucleoside 5'-triphosphate = RNA(n+1) + diphosphate. DNA-dependent RNA polymerase catalyzes the transcription of DNA into RNA using the four ribonucleoside triphosphates as substrates. The sequence is that of DNA-directed RNA polymerase subunit beta from Gossypium hirsutum (Upland cotton).